The following is a 412-amino-acid chain: Serine hydroxymethyltransferase (412 aa).

(6S)-5,6,7,8-tetrahydrofolate is bound by residues Leu-117 and 121–123; that span reads GHL. Residue Lys-226 is modified to N6-(pyridoxal phosphate)lysine. (6S)-5,6,7,8-tetrahydrofolate is bound by residues Glu-242 and 350 to 352; that span reads SPF.

Belongs to the SHMT family. Homodimer. It depends on pyridoxal 5'-phosphate as a cofactor.

Its subcellular location is the cytoplasm. It catalyses the reaction (6R)-5,10-methylene-5,6,7,8-tetrahydrofolate + glycine + H2O = (6S)-5,6,7,8-tetrahydrofolate + L-serine. It participates in one-carbon metabolism; tetrahydrofolate interconversion. It functions in the pathway amino-acid biosynthesis; glycine biosynthesis; glycine from L-serine: step 1/1. Catalyzes the reversible interconversion of serine and glycine with tetrahydrofolate (THF) serving as the one-carbon carrier. Appears to be specific for THF as the pteridine substrate, since the use of tetrahydromethanopterin (H4MPT) is much less efficient. Also exhibits THF-independent aldolase activity toward beta-hydroxyamino acids, producing glycine and aldehydes, via a retro-aldol mechanism. Thus, is able to catalyze the cleavage of L-allo-threonine and L-threo-beta-phenylserine. This Methanosarcina barkeri (strain Fusaro / DSM 804) protein is Serine hydroxymethyltransferase.